The sequence spans 467 residues: Protein indeterminate-domain 6, chloroplastic (467 aa).

The transit peptide at 1–20 (MSSSYNTIALSSTPTFLLSS) directs the protein to the chloroplast. Residues 38-65 (TMVQQQPTSSVAPPPKKRRNQPGNPNPD) are disordered. The segment covering 39 to 48 (MVQQQPTSSV) has biased composition (polar residues). S72 carries the post-translational modification Phosphoserine. C2H2-type zinc fingers lie at residues 82–104 (FLCEVCNKGFQREQNLQLHRRGH) and 123–153 (YLCPEPSCVHHDPARALGDLTGIKKHYYRKH). The C2H2-type 2; degenerate zinc finger occupies 158 to 181 (WKCDKCSKRYAVQSDWKAHSKTCG). Zn(2+) is bound by residues C160, C163, H176, C180, C187, C189, H202, and C206. The segment at 185 to 208 (YRCDCGTIFSRRDSYITHRAFCDA) adopts a CCHC-type 2; atypical zinc-finger fold. An SHR-binding region spans residues 195–207 (RRDSYITHRAFCD). The disordered stretch occupies residues 440–467 (NGRGGRSGGPPLDAEMKFSHPNHPYGKA).

Its subcellular location is the plastid. The protein localises to the chloroplast. Its function is as follows. Probable transcription factor. The polypeptide is Protein indeterminate-domain 6, chloroplastic (Arabidopsis thaliana (Mouse-ear cress)).